Reading from the N-terminus, the 172-residue chain is uncharacterized protein (172 aa).

The PfpI endopeptidase domain maps to 3 to 171 (KKVAIILADE…FNREIVKKLE (169 aa)).

This sequence belongs to the peptidase C56 family.

This is an uncharacterized protein from Staphylococcus epidermidis (strain ATCC 35984 / DSM 28319 / BCRC 17069 / CCUG 31568 / BM 3577 / RP62A).